A 252-amino-acid polypeptide reads, in one-letter code: Type III pantothenate kinase (252 aa).

6–13 (DIGNTSTA) is an ATP binding site. 104–107 (GADR) is a binding site for substrate. Residue aspartate 106 is the Proton acceptor of the active site. Aspartate 128 provides a ligand contact to K(+). ATP is bound at residue threonine 131. Threonine 183 is a substrate binding site.

It belongs to the type III pantothenate kinase family. As to quaternary structure, homodimer. NH4(+) serves as cofactor. K(+) is required as a cofactor.

The protein resides in the cytoplasm. It carries out the reaction (R)-pantothenate + ATP = (R)-4'-phosphopantothenate + ADP + H(+). It participates in cofactor biosynthesis; coenzyme A biosynthesis; CoA from (R)-pantothenate: step 1/5. In terms of biological role, catalyzes the phosphorylation of pantothenate (Pan), the first step in CoA biosynthesis. The polypeptide is Type III pantothenate kinase (Thermus thermophilus (strain ATCC 27634 / DSM 579 / HB8)).